A 452-amino-acid chain; its full sequence is Plasminogen-binding protein PgbA (452 aa).

The tract at residues glutamine 265–lysine 452 is disordered. Composition is skewed to basic and acidic residues over residues leucine 284–lysine 310 and lysine 317–serine 373. Polar residues predominate over residues aspartate 374–asparagine 391. The segment covering asparagine 392–lysine 452 has biased composition (basic and acidic residues).

Its subcellular location is the cell surface. Binds plasminogen, specifically, and in a concentration and lysine-dependent manner. Plasminogen is the precursor of plasmin, a serine protease that cleaves fibrin, fibronectin, laminin and vitronectin. Acquisition of plasminogen/plasmin could enable H.pylori to degrade host components. This Helicobacter pylori (strain ATCC 700392 / 26695) (Campylobacter pylori) protein is Plasminogen-binding protein PgbA (pgbA).